Reading from the N-terminus, the 707-residue chain is Elongation factor G (707 aa).

Residues 8–296 (ERYRNFGIMA…AVVDFLPAPT (289 aa)) enclose the tr-type G domain. GTP contacts are provided by residues 17–24 (AHIDAGKT), 94–98 (DTPGH), and 148–151 (NKMD).

Belongs to the TRAFAC class translation factor GTPase superfamily. Classic translation factor GTPase family. EF-G/EF-2 subfamily.

The protein localises to the cytoplasm. In terms of biological role, catalyzes the GTP-dependent ribosomal translocation step during translation elongation. During this step, the ribosome changes from the pre-translocational (PRE) to the post-translocational (POST) state as the newly formed A-site-bound peptidyl-tRNA and P-site-bound deacylated tRNA move to the P and E sites, respectively. Catalyzes the coordinated movement of the two tRNA molecules, the mRNA and conformational changes in the ribosome. In Paracoccus denitrificans (strain Pd 1222), this protein is Elongation factor G.